The following is a 212-amino-acid chain: Orotate phosphoribosyltransferase (212 aa).

5-phospho-alpha-D-ribose 1-diphosphate is bound by residues Arg94, Lys98, His100, and 120-128; that span reads EDLISTGGS. Ser124 contacts orotate.

Belongs to the purine/pyrimidine phosphoribosyltransferase family. PyrE subfamily. Homodimer. It depends on Mg(2+) as a cofactor.

The enzyme catalyses orotidine 5'-phosphate + diphosphate = orotate + 5-phospho-alpha-D-ribose 1-diphosphate. Its pathway is pyrimidine metabolism; UMP biosynthesis via de novo pathway; UMP from orotate: step 1/2. In terms of biological role, catalyzes the transfer of a ribosyl phosphate group from 5-phosphoribose 1-diphosphate to orotate, leading to the formation of orotidine monophosphate (OMP). The sequence is that of Orotate phosphoribosyltransferase from Bacillus pumilus (strain SAFR-032).